A 309-amino-acid chain; its full sequence is Protein FdhE homolog (309 aa).

The protein belongs to the FdhE family.

The protein localises to the cytoplasm. Its function is as follows. Necessary for formate dehydrogenase activity. The sequence is that of Protein FdhE homolog from Pasteurella multocida (strain Pm70).